The chain runs to 89 residues: UPF0147 protein TV0625 (89 aa).

This sequence belongs to the UPF0147 family.

This is UPF0147 protein TV0625 from Thermoplasma volcanium (strain ATCC 51530 / DSM 4299 / JCM 9571 / NBRC 15438 / GSS1).